The chain runs to 450 residues: tRNA modification GTPase MnmE (450 aa).

(6S)-5-formyl-5,6,7,8-tetrahydrofolate contacts are provided by arginine 23, glutamate 79, and lysine 118. One can recognise a TrmE-type G domain in the interval 214-374; sequence GITLILVGKP…LKEHILNKVG (161 aa). Residue asparagine 224 participates in K(+) binding. Residues 224–229, 243–249, and 268–271 each bind GTP; these read NAGKSS, TSIAGTT, and DTAG. Serine 228 is a binding site for Mg(2+). Residues threonine 243, isoleucine 245, and threonine 248 each contribute to the K(+) site. Threonine 249 serves as a coordination point for Mg(2+). (6S)-5-formyl-5,6,7,8-tetrahydrofolate is bound at residue lysine 450.

Belongs to the TRAFAC class TrmE-Era-EngA-EngB-Septin-like GTPase superfamily. TrmE GTPase family. Homodimer. Heterotetramer of two MnmE and two MnmG subunits. Requires K(+) as cofactor.

Its subcellular location is the cytoplasm. Exhibits a very high intrinsic GTPase hydrolysis rate. Involved in the addition of a carboxymethylaminomethyl (cmnm) group at the wobble position (U34) of certain tRNAs, forming tRNA-cmnm(5)s(2)U34. The protein is tRNA modification GTPase MnmE of Francisella tularensis subsp. tularensis (strain FSC 198).